The following is a 215-amino-acid chain: Pyrrolidone-carboxylate peptidase (215 aa).

Active-site residues include E80, C143, and H167.

This sequence belongs to the peptidase C15 family. In terms of assembly, homotetramer.

It is found in the cytoplasm. The catalysed reaction is Release of an N-terminal pyroglutamyl group from a polypeptide, the second amino acid generally not being Pro.. Functionally, removes 5-oxoproline from various penultimate amino acid residues except L-proline. This is Pyrrolidone-carboxylate peptidase from Yersinia pestis bv. Antiqua (strain Antiqua).